Reading from the N-terminus, the 169-residue chain is MNKLLYLAGRILKPKGLKGELKVLPETDFPESFLQRKLLLVGATEQSAVERRVAGATLQNGFVLLRFYGIDSREDAESIVGERIYITEDDLIPLPPDTAYIHDLVGLRVLDEDCREIGVIRDVLKLPAHEVYEIAAGDKIVLVPAIEEFVVETDLEKGEMTIRRFDEFL.

The region spanning 95–168 (PPDTAYIHDL…EMTIRRFDEF (74 aa)) is the PRC barrel domain.

Belongs to the RimM family. In terms of assembly, binds ribosomal protein uS19.

The protein resides in the cytoplasm. Functionally, an accessory protein needed during the final step in the assembly of 30S ribosomal subunit, possibly for assembly of the head region. Essential for efficient processing of 16S rRNA. May be needed both before and after RbfA during the maturation of 16S rRNA. It has affinity for free ribosomal 30S subunits but not for 70S ribosomes. The chain is Ribosome maturation factor RimM from Prosthecochloris aestuarii (strain DSM 271 / SK 413).